A 446-amino-acid polypeptide reads, in one-letter code: Protein odr-4 homolog (446 aa).

2 consecutive transmembrane segments (helical) span residues 81 to 101 (MLPG…ELSK) and 424 to 444 (MGVV…FNYF).

It belongs to the ODR-4 family.

It is found in the membrane. In terms of biological role, may play a role in the trafficking of a subset of G-protein coupled receptors. This Gallus gallus (Chicken) protein is Protein odr-4 homolog (ODR4).